A 145-amino-acid chain; its full sequence is Protein SPMIP3 (145 aa).

The polypeptide is Protein SPMIP3 (Mus musculus (Mouse)).